The chain runs to 915 residues: Protein translocase subunit SecA (915 aa).

ATP contacts are provided by residues glutamine 87, 105-109 (GEGKT), and aspartate 516. The interval 854 to 915 (QKMQMRHEQL…KYKNCHGQLE (62 aa)) is disordered. Residues cysteine 899, cysteine 901, cysteine 910, and histidine 911 each contribute to the Zn(2+) site.

This sequence belongs to the SecA family. In terms of assembly, monomer and homodimer. Part of the essential Sec protein translocation apparatus which comprises SecA, SecYEG and auxiliary proteins SecDF-YajC and YidC. The cofactor is Zn(2+).

Its subcellular location is the cell inner membrane. The protein resides in the cytoplasm. It carries out the reaction ATP + H2O + cellular proteinSide 1 = ADP + phosphate + cellular proteinSide 2.. Part of the Sec protein translocase complex. Interacts with the SecYEG preprotein conducting channel. Has a central role in coupling the hydrolysis of ATP to the transfer of proteins into and across the cell membrane, serving both as a receptor for the preprotein-SecB complex and as an ATP-driven molecular motor driving the stepwise translocation of polypeptide chains across the membrane. This chain is Protein translocase subunit SecA, found in Cellvibrio japonicus (strain Ueda107) (Pseudomonas fluorescens subsp. cellulosa).